A 199-amino-acid chain; its full sequence is Ribosome maturation factor RimM (199 aa).

The 96-residue stretch at 100–195 (ADEWYPKDLI…YLTLDPPGGL (96 aa)) folds into the PRC barrel domain.

Belongs to the RimM family. As to quaternary structure, binds ribosomal protein uS19.

The protein resides in the cytoplasm. Functionally, an accessory protein needed during the final step in the assembly of 30S ribosomal subunit, possibly for assembly of the head region. Essential for efficient processing of 16S rRNA. May be needed both before and after RbfA during the maturation of 16S rRNA. It has affinity for free ribosomal 30S subunits but not for 70S ribosomes. In Bifidobacterium longum (strain DJO10A), this protein is Ribosome maturation factor RimM.